A 265-amino-acid polypeptide reads, in one-letter code: Undecaprenyl-diphosphatase (265 aa).

7 helical membrane passes run 38-58 (SDMFNIVIQAGAILAVTIIYW), 80-100 (LIVAFLITAILGLVVKKLGFE), 107-127 (PIAWALIIGGIWMIFAEWAAA), 135-155 (ITWLVAILVGIAQIVAGVFPG), 175-195 (AAATEFAFLVGIPTMYAASGY), 213-233 (ALAIAFIVSTIVAFIAVKWLL), and 244-264 (FAIYRIILGVLLLGMATSGLI).

This sequence belongs to the UppP family.

It is found in the cell inner membrane. It carries out the reaction di-trans,octa-cis-undecaprenyl diphosphate + H2O = di-trans,octa-cis-undecaprenyl phosphate + phosphate + H(+). Its function is as follows. Catalyzes the dephosphorylation of undecaprenyl diphosphate (UPP). Confers resistance to bacitracin. This is Undecaprenyl-diphosphatase from Rhizobium etli (strain CIAT 652).